Here is a 182-residue protein sequence, read N- to C-terminus: ADP-ribosylation factor-like protein 3 (182 aa).

Glycine 2 carries N-myristoyl glycine lipidation. Residue serine 5 is modified to Phosphoserine. GTP is bound by residues 24–31 (GLDNAGKT), threonine 48, 67–71 (DIGGQ), glycine 70, 126–129 (NKQD), and 159–161 (SAL). 2 residues coordinate Mg(2+): threonine 31 and threonine 48.

Belongs to the small GTPase superfamily. Arf family. As to quaternary structure, found in a complex with ARL3, RP2 and UNC119 (or UNC119B); RP2 induces hydrolysis of GTP ARL3 in the complex, leading to the release of UNC119 (or UNC119B). Interacts with RP2; interaction is direct and stimulated with the activated GTP-bound form of ARL3. Interacts with SYS1. Interacts with ARL2BP; the GTP-bound form interacts with ARL2BP. Microtubule-associated protein. Does not interact with TBCC. Interacts with RP2. Interacts with PDE6D; the interaction occurs specifically with the GTP-bound form of ARL3. Interacts with GGA1; the interaction recruits PKD1:PKD2 complex to trans-Golgi network and is required for ciliary targeting of PKD1:PKD2 complex. Interacts with DNAAF9.

Its subcellular location is the golgi apparatus membrane. It localises to the cytoplasm. It is found in the cytoskeleton. The protein localises to the spindle. The protein resides in the nucleus. Its subcellular location is the microtubule organizing center. It localises to the centrosome. It is found in the cell projection. The protein localises to the cilium. Its function is as follows. Small GTP-binding protein which cycles between an inactive GDP-bound and an active GTP-bound form, and the rate of cycling is regulated by guanine nucleotide exchange factors (GEF) and GTPase-activating proteins (GAP). Required for normal cytokinesis and cilia signaling. Requires assistance from GTPase-activating proteins (GAPs) like RP2 and PDE6D, in order to cycle between inactive GDP-bound and active GTP-bound forms. Required for targeting proteins to the cilium, including myristoylated NPHP3 and prenylated INPP5E. Targets NPHP3 to the ciliary membrane by releasing myristoylated NPHP3 from UNC119B cargo adapter into the cilium. Required for PKD1:PKD2 complex targeting from the trans-Golgi network to the cilium. This Rattus norvegicus (Rat) protein is ADP-ribosylation factor-like protein 3 (Arl3).